Consider the following 371-residue polypeptide: Cytochrome b (371 aa).

A run of 4 helical transmembrane segments spans residues Phe25–Val45, Trp69–Ile90, Trp105–Leu125, and Phe170–Ile190. Positions 75 and 89 each coordinate heme b. Heme b contacts are provided by His174 and His188. An a ubiquinone-binding site is contributed by His193. 4 helical membrane-spanning segments follow: residues His218–Phe238, Leu280–His300, Leu312–Thr332, and Phe339–Pro358.

Belongs to the cytochrome b family. As to quaternary structure, the cytochrome bc1 complex contains 3 respiratory subunits (MT-CYB, CYC1 and UQCRFS1), 2 core proteins (UQCRC1 and UQCRC2) and probably 6 low-molecular weight proteins. The cofactor is heme b.

It is found in the mitochondrion inner membrane. Its function is as follows. Component of the ubiquinol-cytochrome c reductase complex (complex III or cytochrome b-c1 complex) that is part of the mitochondrial respiratory chain. The b-c1 complex mediates electron transfer from ubiquinol to cytochrome c. Contributes to the generation of a proton gradient across the mitochondrial membrane that is then used for ATP synthesis. This Liasis olivaceus (Olive python) protein is Cytochrome b (MT-CYB).